We begin with the raw amino-acid sequence, 150 residues long: uncharacterized protein (150 aa).

The protein belongs to the OsmC/Ohr family.

This is an uncharacterized protein from Bacillus subtilis (strain 168).